Consider the following 117-residue polypeptide: Hydrogenase maturation factor HypA (117 aa).

Ni(2+) is bound at residue H2. The Zn(2+) site is built by C73, C76, C89, and C92.

It belongs to the HypA/HybF family.

Its function is as follows. Involved in the maturation of [NiFe] hydrogenases. Required for nickel insertion into the metal center of the hydrogenase. The protein is Hydrogenase maturation factor HypA of Shewanella baltica (strain OS223).